A 120-amino-acid polypeptide reads, in one-letter code: Ribosome-binding factor A (120 aa).

The protein belongs to the RbfA family. In terms of assembly, monomer. Binds 30S ribosomal subunits, but not 50S ribosomal subunits or 70S ribosomes.

It is found in the cytoplasm. Functionally, one of several proteins that assist in the late maturation steps of the functional core of the 30S ribosomal subunit. Associates with free 30S ribosomal subunits (but not with 30S subunits that are part of 70S ribosomes or polysomes). Required for efficient processing of 16S rRNA. May interact with the 5'-terminal helix region of 16S rRNA. This is Ribosome-binding factor A from Chlamydia pneumoniae (Chlamydophila pneumoniae).